The following is a 213-amino-acid chain: Octanoyltransferase (213 aa).

One can recognise a BPL/LPL catalytic domain in the interval 35-213 (DKHGDAVLLL…ERHLPTLVGA (179 aa)). Substrate contacts are provided by residues 73 to 80 (RGGKITWH), 145 to 147 (AIG), and 158 to 160 (GFS). The active-site Acyl-thioester intermediate is the C176.

It belongs to the LipB family.

The protein localises to the cytoplasm. It catalyses the reaction octanoyl-[ACP] + L-lysyl-[protein] = N(6)-octanoyl-L-lysyl-[protein] + holo-[ACP] + H(+). Its pathway is protein modification; protein lipoylation via endogenous pathway; protein N(6)-(lipoyl)lysine from octanoyl-[acyl-carrier-protein]: step 1/2. Functionally, catalyzes the transfer of endogenously produced octanoic acid from octanoyl-acyl-carrier-protein onto the lipoyl domains of lipoate-dependent enzymes. Lipoyl-ACP can also act as a substrate although octanoyl-ACP is likely to be the physiological substrate. The chain is Octanoyltransferase from Salinispora arenicola (strain CNS-205).